The sequence spans 51 residues: NLWQFGMMIQHTTRENPLFKYFSYGCYCGWGGGGPLDATDRCCFVHDCCYG.

Ca(2+) is bound by residues Y27, G29, and G31. C28 and C43 are oxidised to a cystine. H46 is an active-site residue. Residue D47 participates in Ca(2+) binding.

Belongs to the phospholipase A2 family. Group II subfamily. D49 sub-subfamily. The cofactor is Ca(2+). As to expression, expressed by the venom gland.

The protein resides in the secreted. It carries out the reaction a 1,2-diacyl-sn-glycero-3-phosphocholine + H2O = a 1-acyl-sn-glycero-3-phosphocholine + a fatty acid + H(+). Its function is as follows. Snake venom phospholipase A2 (PLA2) that impairs hemostasis. PLA2 catalyzes the calcium-dependent hydrolysis of the 2-acyl groups in 3-sn-phosphoglycerides. This chain is Basic phospholipase A2 Bfon11, found in Bothrops fonsecai (Fonseca's lancehead).